Reading from the N-terminus, the 222-residue chain is Phosphoribosylformylglycinamidine synthase subunit PurQ (222 aa).

One can recognise a Glutamine amidotransferase type-1 domain in the interval 3 to 222; that stretch reads SAVVLLPGLN…LFEGALGIAA (220 aa). C86 serves as the catalytic Nucleophile. Residues H196 and E198 contribute to the active site.

As to quaternary structure, part of the FGAM synthase complex composed of 1 PurL, 1 PurQ and 2 PurS subunits.

The protein resides in the cytoplasm. It catalyses the reaction N(2)-formyl-N(1)-(5-phospho-beta-D-ribosyl)glycinamide + L-glutamine + ATP + H2O = 2-formamido-N(1)-(5-O-phospho-beta-D-ribosyl)acetamidine + L-glutamate + ADP + phosphate + H(+). The enzyme catalyses L-glutamine + H2O = L-glutamate + NH4(+). The protein operates within purine metabolism; IMP biosynthesis via de novo pathway; 5-amino-1-(5-phospho-D-ribosyl)imidazole from N(2)-formyl-N(1)-(5-phospho-D-ribosyl)glycinamide: step 1/2. In terms of biological role, part of the phosphoribosylformylglycinamidine synthase complex involved in the purines biosynthetic pathway. Catalyzes the ATP-dependent conversion of formylglycinamide ribonucleotide (FGAR) and glutamine to yield formylglycinamidine ribonucleotide (FGAM) and glutamate. The FGAM synthase complex is composed of three subunits. PurQ produces an ammonia molecule by converting glutamine to glutamate. PurL transfers the ammonia molecule to FGAR to form FGAM in an ATP-dependent manner. PurS interacts with PurQ and PurL and is thought to assist in the transfer of the ammonia molecule from PurQ to PurL. The sequence is that of Phosphoribosylformylglycinamidine synthase subunit PurQ from Mesorhizobium japonicum (strain LMG 29417 / CECT 9101 / MAFF 303099) (Mesorhizobium loti (strain MAFF 303099)).